The primary structure comprises 245 residues: tRNA (guanine-N(1)-)-methyltransferase (245 aa).

Residues Gly113 and 133 to 138 (IGDYVL) each bind S-adenosyl-L-methionine.

Belongs to the RNA methyltransferase TrmD family. In terms of assembly, homodimer.

It is found in the cytoplasm. The enzyme catalyses guanosine(37) in tRNA + S-adenosyl-L-methionine = N(1)-methylguanosine(37) in tRNA + S-adenosyl-L-homocysteine + H(+). Functionally, specifically methylates guanosine-37 in various tRNAs. This is tRNA (guanine-N(1)-)-methyltransferase from Anoxybacillus flavithermus (strain DSM 21510 / WK1).